Consider the following 251-residue polypeptide: Uridylate kinase (251 aa).

Residue 11-14 (KLSG) participates in ATP binding. Positions 19 to 24 (GNQGFG) are involved in allosteric activation by GTP. Glycine 53 contacts UMP. Glycine 54 and arginine 58 together coordinate ATP. Residues aspartate 73 and 134 to 141 (TGNPYFTT) each bind UMP. Threonine 161, tyrosine 167, and aspartate 170 together coordinate ATP.

This sequence belongs to the UMP kinase family. In terms of assembly, homohexamer.

It localises to the cytoplasm. The enzyme catalyses UMP + ATP = UDP + ADP. It functions in the pathway pyrimidine metabolism; CTP biosynthesis via de novo pathway; UDP from UMP (UMPK route): step 1/1. With respect to regulation, allosterically activated by GTP. Inhibited by UTP. Its function is as follows. Catalyzes the reversible phosphorylation of UMP to UDP. This Protochlamydia amoebophila (strain UWE25) protein is Uridylate kinase.